We begin with the raw amino-acid sequence, 142 residues long: Protein transport protein BET1 (142 aa).

Residues 1-36 (MSSRFAGGNAYQRDTGRTQLFGPADGSNSLDDNVSS) are disordered. Residues 1–117 (MSSRFAGGNA…FGNMMEMARR (117 aa)) lie on the Cytoplasmic side of the membrane. The span at 26–36 (GSNSLDDNVSS) shows a compositional bias: polar residues. Residues 52 to 114 (ASLESQSEEQ…KRTFGNMMEM (63 aa)) form the t-SNARE coiled-coil homology domain. A helical; Anchor for type IV membrane protein transmembrane segment spans residues 118 to 141 (SGISIKTWLIIFFMVGVLFFWVWI). Position 142 (Thr-142) is a topological domain, vesicular.

Belongs to the BET1 family. In terms of assembly, component of a SNARE complex consisting of SED5, BOS1, BET1 and SEC22 or YKT6. Interacts with SEC24.

It is found in the golgi apparatus membrane. The protein resides in the endoplasmic reticulum membrane. In terms of biological role, SNARE required for targeting and fusion of ER-derived transport vesicles with the Golgi complex. The protein is Protein transport protein BET1 (BET1) of Saccharomyces cerevisiae (strain ATCC 204508 / S288c) (Baker's yeast).